We begin with the raw amino-acid sequence, 327 residues long: GMP reductase (327 aa).

Cys-176 (thioimidate intermediate) is an active-site residue. Residue 205–228 coordinates NADP(+); the sequence is IIADGGIRTHGDIAKSIRFGASMV.

It belongs to the IMPDH/GMPR family. GuaC type 2 subfamily.

The enzyme catalyses IMP + NH4(+) + NADP(+) = GMP + NADPH + 2 H(+). In terms of biological role, catalyzes the irreversible NADPH-dependent deamination of GMP to IMP. It functions in the conversion of nucleobase, nucleoside and nucleotide derivatives of G to A nucleotides, and in maintaining the intracellular balance of A and G nucleotides. The protein is GMP reductase of Streptococcus pyogenes serotype M49 (strain NZ131).